The sequence spans 335 residues: Stearoyl-CoA desaturase 5 (335 aa).

The Cytoplasmic segment spans residues 1–54; sequence MPGPAVDAEKVPFRSAKEEIRAGVGVEGSEGGGGGGGRERPGARGHRQDIVWRN. The interval 24–44 is disordered; it reads VGVEGSEGGGGGGGRERPGAR. The span at 25-36 shows a compositional bias: gly residues; it reads GVEGSEGGGGGG. Asn54 is a binding site for substrate. Residues 55–75 form a helical membrane-spanning segment; sequence VFLMSLLHLAAVYSLVLIPKA. At 76–77 the chain is on the lumenal side; the sequence is QP. Residues 78–98 form a helical membrane-spanning segment; that stretch reads LTLLWAYFCFLLTALGVTAGA. Fe cation-binding residues include His99 and His104. The Histidine box-1 motif lies at 99–104; it reads HRLWSH. At 99–198 the chain is on the cytoplasmic side; the sequence is HRLWSHRSYK…VVRFQRKYYK (100 aa). Substrate-binding residues include Asn127, Arg134, and Asp135. Residues His136, His139, and His140 each contribute to the Fe cation site. Residues 136 to 140 carry the Histidine box-2 motif; sequence HRVHH. Residues Arg167 and Lys168 each coordinate substrate. A helical transmembrane segment spans residues 199–219; that stretch reads ITVVLMCFVVPTLVPWYIWGE. The Lumenal portion of the chain corresponds to 220–227; it reads SLWNSYFL. The helical transmembrane segment at 228 to 247 threads the bilayer; that stretch reads ASILRYTISLNVTWLVNSVA. Trp241 serves as a coordination point for substrate. Positions 248, 277, 280, and 281 each coordinate Fe cation. Over 248–335 the chain is Cytoplasmic; the sequence is HMYGNRPYDK…RKARTGDGSA (88 aa). The Histidine box-3 motif lies at 277-281; the sequence is HNYHH.

The protein belongs to the fatty acid desaturase type 1 family. May self-associate and form homodimers. The cofactor is Fe(2+). In terms of tissue distribution, detected in brain.

Its subcellular location is the endoplasmic reticulum membrane. It catalyses the reaction octadecanoyl-CoA + 2 Fe(II)-[cytochrome b5] + O2 + 2 H(+) = (9Z)-octadecenoyl-CoA + 2 Fe(III)-[cytochrome b5] + 2 H2O. The enzyme catalyses hexadecanoyl-CoA + 2 Fe(II)-[cytochrome b5] + O2 + 2 H(+) = (9Z)-hexadecenoyl-CoA + 2 Fe(III)-[cytochrome b5] + 2 H2O. In terms of biological role, stearoyl-CoA desaturase that utilizes O(2) and electrons from reduced cytochrome b5 to introduce the first double bond into saturated fatty acyl-CoA substrates. Catalyzes the insertion of a cis double bond at the delta-9 position into fatty acyl-CoA substrates including palmitoyl-CoA and stearoyl-CoA. Gives rise to a mixture of 16:1 and 18:1 unsaturated fatty acids. Involved in neuronal cell proliferation and differentiation through down-regulation of EGFR/AKT/MAPK and Wnt signaling pathways. The sequence is that of Stearoyl-CoA desaturase 5 (SCD5) from Bos taurus (Bovine).